Consider the following 452-residue polypeptide: MKLPVVAIIGRPNVGKSTLVNRIAGDQQAIVFDQPGITRDRTYQPAFWCDRDFQIVDTGGLVFNDDSEFLPLIREQALIALAEASVAIFVVDGQGGITAGDREIAAWLRQQNVPILLAVNKCESVEQGILQATEFWELAIGEPFPISAIHGSGTGELLDAVIKYLPPAAEIPENEEIKVAIIGRPNVGKSSLLNALTGQQRAIVSPISGTTRDSIDTLIEREGQVYRLIDTAGIRRKKNVDYGAEFFSINRAFKAIRRSDVVLFVIDVLDGVTEQDLKLAGRIIEEGRAVVLVVNKWDAVEKDTYTINTYTKMLQDRLYFMDWAEMIFVSAMTGQRVTKILELVDIAAESHRRRVSTSVINDVIEEAVKWHNPPTTRGGKQGKLYYGTQVSSQPPTIALFVNDPQRFNDNYRRYIEGQFRQQLGFKGTPIRLIWRGKPAREVEKTVNRATKV.

EngA-type G domains are found at residues 4–169 (PVVA…PPAA) and 177–352 (IKVA…ESHR). GTP is bound by residues 10–17 (GRPNVGKS), 57–61 (DTGGL), 120–123 (NKCE), 183–190 (GRPNVGKS), 230–234 (DTAGI), and 295–298 (NKWD). Residues 353–438 (RRVSTSVIND…PIRLIWRGKP (86 aa)) enclose the KH-like domain.

It belongs to the TRAFAC class TrmE-Era-EngA-EngB-Septin-like GTPase superfamily. EngA (Der) GTPase family. Associates with the 50S ribosomal subunit.

In terms of biological role, GTPase that plays an essential role in the late steps of ribosome biogenesis. The protein is GTPase Der of Microcystis aeruginosa (strain NIES-843 / IAM M-2473).